The primary structure comprises 343 residues: UPF0284 protein Msed_0735 (343 aa).

This sequence belongs to the UPF0284 family.

The sequence is that of UPF0284 protein Msed_0735 from Metallosphaera sedula (strain ATCC 51363 / DSM 5348 / JCM 9185 / NBRC 15509 / TH2).